Here is a 287-residue protein sequence, read N- to C-terminus: Chlorophyll a-b binding protein CP29.2, chloroplastic (287 aa).

A chloroplast-targeting transit peptide spans 1-31 (MAATSTAAAASSIMGTRVVSDISSNSSRFTA). An N2-acetylarginine modification is found at arginine 32. Threonine 37 carries the phosphothreonine modification. Tryptophan 55 contributes to the chlorophyll b binding site. Phenylalanine 75 lines the chlorophyll a pocket. 2 positions are modified to phosphothreonine: threonine 109 and threonine 111. Chlorophyll a contacts are provided by glutamate 137 and histidine 140. The chain crosses the membrane as a helical span at residues 143 to 163 (WAMLATLGAITVEWLTGVTWQ). Leucine 177 contributes to the chlorophyll a binding site. A helical transmembrane segment spans residues 181–201 (LPFSISTLIWIEVLVIGYIEF). Chlorophyll b-binding residues include glutamate 200 and arginine 203. Residues glutamate 239, histidine 242, arginine 244, glutamine 256, and histidine 271 each contribute to the chlorophyll a site. Residues 245–265 (LAMVGFLGFAVQAAATGKGPL) traverse the membrane as a helical segment.

It belongs to the light-harvesting chlorophyll a/b-binding (LHC) protein family. As to quaternary structure, the LHC complex consists of chlorophyll a-b binding proteins. Requires Binds at least 14 chlorophylls (8 Chl-a and 6 Chl-b) and carotenoids such as lutein and neoxanthin. as cofactor. Photoregulated by reversible phosphorylation of its threonine residues.

It is found in the plastid. Its subcellular location is the chloroplast thylakoid membrane. In terms of biological role, the light-harvesting complex (LHC) functions as a light receptor, it captures and delivers excitation energy to photosystems with which it is closely associated. This chain is Chlorophyll a-b binding protein CP29.2, chloroplastic (LHCB4.2), found in Arabidopsis thaliana (Mouse-ear cress).